The sequence spans 201 residues: TATA-box-binding protein 2 (201 aa).

A run of 2 repeats spans residues Leu26–Ile102 and Ile116–Leu193.

It belongs to the TBP family. In terms of assembly, belongs to the TFIID complex together with the TBP-associated factors (TAFs). Binds DNA as monomer.

It localises to the nucleus. General transcription factor that functions at the core of the DNA-binding multiprotein factor TFIID. Binding of TFIID to the TATA box is the initial transcriptional step of the pre-initiation complex (PIC), playing a role in the activation of eukaryotic genes transcribed by RNA polymerase II. This is TATA-box-binding protein 2 (TBP2) from Triticum aestivum (Wheat).